The following is a 443-amino-acid chain: EGF-containing fibulin-like extracellular matrix protein 2 (443 aa).

The first 25 residues, 1-25 (MLPFASCLPGSLLLWALLLLLLGAA), serve as a signal peptide directing secretion. Residues 36–81 (YTECTDGYEWDADSQHCRDVNECLTIPEACKGEMKCINHYGGYLCL) form the EGF-like 1; atypical domain. Disulfide bonds link cysteine 58/cysteine 121, cysteine 65/cysteine 80, cysteine 71/cysteine 109, cysteine 127/cysteine 140, cysteine 134/cysteine 149, cysteine 151/cysteine 162, cysteine 168/cysteine 177, cysteine 173/cysteine 186, cysteine 188/cysteine 201, cysteine 207/cysteine 217, cysteine 213/cysteine 226, cysteine 228/cysteine 241, cysteine 247/cysteine 258, cysteine 254/cysteine 267, cysteine 269/cysteine 281, cysteine 287/cysteine 300, cysteine 294/cysteine 309, and cysteine 315/cysteine 327. In terms of domain architecture, EGF-like 2; calcium-binding spans 123–163 (DVDECAQALHDCRPSQDCHNLPGSYQCTCPDGYRKVGPECV). In terms of domain architecture, EGF-like 3; calcium-binding spans 164–202 (DIDECRYRYCQHRCVNLPGSFRCQCEPGFQLGPNNRSCV). Asparagine 198 carries N-linked (GlcNAc...) asparagine glycosylation. In terms of domain architecture, EGF-like 4; calcium-binding spans 203-242 (DVNECDMGAPCEQRCFNSYGTFLCRCNQGYELHRDGFSCS). An EGF-like 5; calcium-binding domain is found at 243-282 (DIDECSYSSYLCQYRCVNEPGRFSCHCPQGYQLLATRLCQ). Residues 283-328 (DIDECETGAHQCSEAQTCVNFHGGYRCVDTNRCVEPYVQVSDNRCF) enclose the EGF-like 6; calcium-binding domain. Asparagine 394 carries an N-linked (GlcNAc...) asparagine glycan.

This sequence belongs to the fibulin family. Homodimer; disulfide-linked. Multimer; allows heparin binding. Monomer. Interacts with FBN1 (via N-terminal domain); this interaction inhibits EFEMP2 binding to LOX and ELN. Interacts with LOX (via propeptide); this interaction is strong and facilitates formation of ternary complexes with ELN during elastic fiber assembly; this interaction limits interaction of EFEMP2 with FBLN5. Interacts with PITX2. Interacts with ELN with moderate affinity; this interaction regulates ELN self-assembly maturation stage. Interacts with FBLN5 with moderate affinity. Interacts with LOXL1 (via propeptide), LTBP1 and TGFB1 stronger than with LOXL2 and LTBP3. Interacts with PCOLCE. Interacts with collagen type IV trimer (COL4A1-COL4A1-COL4A2), NID2 and moderately with COL15A1-derived endostatin. Interacts with EMILIN1; this interaction promotes the incorporation of EFEMP2 into the extracellular matrix. Interacts with LTBP4; the LTBP4 long form (LTBP4L) has a stronger binding affinity than the LTBP4 short form and the LTBP4 long form promotes fibrillar deposition of EFEMP2. Post-translationally, N-glycosylated; contains mostly complex-type glycans. Not O-glycosylated. Cleaved by ELANE; produces a 50-55 kDa fragment. Cleaved by MMP2 and MMP9; produces several fragments.

It is found in the secreted. The protein resides in the extracellular space. It localises to the extracellular matrix. Its subcellular location is the basement membrane. In terms of biological role, plays a crucial role in elastic fiber formation in tissue, and in the formation of ultrastructural connections between elastic laminae and smooth muscle cells in the aorta, therefore participates in terminal differentiation and maturation of smooth muscle cell (SMC) and in the mechanical properties and wall integrity maintenance of the aorta. In addition, is involved in the control of collagen fibril assembly in tissue throught proteolytic activation of LOX leading to cross- linking of collagen and elastin. Also promotes ELN coacervation and participates in the deposition of ELN coacervates on to microfibrils but also regulates ELN cross- linking through LOX interaction. Moreover adheres to the cells through heparin binding in a calcium-dependent manner and regulates vascularlar smooth muscle cells proliferation through angiotensin signaling. The polypeptide is EGF-containing fibulin-like extracellular matrix protein 2 (Cricetulus griseus (Chinese hamster)).